The chain runs to 477 residues: Cysteine--tRNA ligase (477 aa).

C29 lines the Zn(2+) pocket. The 'HIGH' region signature appears at 31 to 41 (PTVYDFAHIGN). Positions 224, 249, and 253 each coordinate Zn(2+). A 'KMSKS' region motif is present at residues 282–286 (KMSKS). K285 provides a ligand contact to ATP.

Belongs to the class-I aminoacyl-tRNA synthetase family. Monomer. It depends on Zn(2+) as a cofactor.

The protein localises to the cytoplasm. The enzyme catalyses tRNA(Cys) + L-cysteine + ATP = L-cysteinyl-tRNA(Cys) + AMP + diphosphate. The sequence is that of Cysteine--tRNA ligase from Nitrobacter winogradskyi (strain ATCC 25391 / DSM 10237 / CIP 104748 / NCIMB 11846 / Nb-255).